Reading from the N-terminus, the 216-residue chain is MQAYNTQKGIVCPLDRANVDTDQIIAKQFLKSIKRTGFGVNLFDDWRYLDEGYPGQDNSTRIINPDFILNKPRYQGASILLARRNFGCGSSREHAPWALSEYGFRTVIAPSFADIFYNNCFKNGMLPIVLDEEIVDSLMKATFANEGYELTADLERQVVITPTGEEYAFEVDDFRKHCLLNGLDDIGLTLQQSDAIKDYEQKMMQKTPWIFNEVRA.

Belongs to the LeuD family. LeuD type 1 subfamily. In terms of assembly, heterodimer of LeuC and LeuD.

It carries out the reaction (2R,3S)-3-isopropylmalate = (2S)-2-isopropylmalate. It participates in amino-acid biosynthesis; L-leucine biosynthesis; L-leucine from 3-methyl-2-oxobutanoate: step 2/4. Functionally, catalyzes the isomerization between 2-isopropylmalate and 3-isopropylmalate, via the formation of 2-isopropylmaleate. This chain is 3-isopropylmalate dehydratase small subunit, found in Psychrobacter arcticus (strain DSM 17307 / VKM B-2377 / 273-4).